Reading from the N-terminus, the 672-residue chain is MAQVVFSSWGRTIVDNRKGGEAQDVSFRLPTTLDGERQIAAFMGWDGIILYDLKVDVPAMAAEYMKRVQTQYCCGKCTPGKKGTKVLADVLAAIIEGRATEADLDTIDDLADLLTNCKCTLCQSSTIPVLDAVKHFREDFLAYITGIRKPANVHRFIDKYTAPCMDRCPAHIDIPAYIEAIKEYRFDESLDIIRDNMPLPSVCGRVCPHPCETHCRRKNVDDSVNIMVLKRSASDYEWMHNAAPPMQPKPQKNKKVAIVGAGPAGLACAYYLALEGYPCTIYEALPEGYGGGMIAVGIPPYRQPRHLLQRDIDIISSMGVDIIYDTRIGKDISLEELKQKFDAVFLAPGAHRSKPMGVEGEDKGYKGFLKGGIDFLREAYMGRPTGMGKKVVVVGGGNTAIDCVRVALREGAEESTLLYRRSRKEMPADVWEVDGADEEGVRFEFQVLPTRVLVDENEQVTGVECVRMALGEPDASGRRRPEPVPGSEFVVECDTVIPAIGQDPDLSFIPDNLGIDITKWNTVVTKYVPLKDAAGKDLKDGMGNPLARVLITDLEGVFAGGDAEIGPLTVVACIGNAHRAARVIQRWLEEGKAYLTEDELMEDILTNMPVYDKNEKVPWLDSRERAHQAEVHGQERASKGNYQEVELGFVDTQAVEEAERCLRCYRVAMAAI.

[4Fe-4S] cluster contacts are provided by Cys203, Cys207, Cys211, and Cys215. Position 254–283 (254–283) interacts with FAD; it reads KKVAIVGAGPAGLACAYYLALEGYPCTIYE. 388 to 421 provides a ligand contact to NADP(+); it reads GKKVVVVGGGNTAIDCVRVALREGAEESTLLYRR. 552–562 provides a ligand contact to FAD; sequence TDLEGVFAGGD.

Heterotetramer with 2 alpha subunits. It depends on [4Fe-4S] cluster as a cofactor. Requires FAD as cofactor.

It is found in the cell membrane. Its function is as follows. Probably involved in acetate metabolism and not in the reduction of Fe(3+) chelates. May serve as a major route for NADP regeneration. This is NADPH-Fe(3+) oxidoreductase subunit beta (sfrB) from Geobacter sulfurreducens (strain DL-1 / KN400).